Here is a 173-residue protein sequence, read N- to C-terminus: Crossover junction endodeoxyribonuclease RuvC (173 aa).

Active-site residues include aspartate 11, glutamate 71, and aspartate 143. The Mg(2+) site is built by aspartate 11, glutamate 71, and aspartate 143.

The protein belongs to the RuvC family. In terms of assembly, homodimer which binds Holliday junction (HJ) DNA. The HJ becomes 2-fold symmetrical on binding to RuvC with unstacked arms; it has a different conformation from HJ DNA in complex with RuvA. In the full resolvosome a probable DNA-RuvA(4)-RuvB(12)-RuvC(2) complex forms which resolves the HJ. Mg(2+) serves as cofactor.

The protein localises to the cytoplasm. It carries out the reaction Endonucleolytic cleavage at a junction such as a reciprocal single-stranded crossover between two homologous DNA duplexes (Holliday junction).. Its function is as follows. The RuvA-RuvB-RuvC complex processes Holliday junction (HJ) DNA during genetic recombination and DNA repair. Endonuclease that resolves HJ intermediates. Cleaves cruciform DNA by making single-stranded nicks across the HJ at symmetrical positions within the homologous arms, yielding a 5'-phosphate and a 3'-hydroxyl group; requires a central core of homology in the junction. The consensus cleavage sequence is 5'-(A/T)TT(C/G)-3'. Cleavage occurs on the 3'-side of the TT dinucleotide at the point of strand exchange. HJ branch migration catalyzed by RuvA-RuvB allows RuvC to scan DNA until it finds its consensus sequence, where it cleaves and resolves the cruciform DNA. The chain is Crossover junction endodeoxyribonuclease RuvC from Brucella suis biovar 1 (strain 1330).